The primary structure comprises 568 residues: Potassium-transporting ATPase potassium-binding subunit (568 aa).

Helical transmembrane passes span 3–23 (TEILGVAVQIVLMVVLAYPLG), 64–84 (FLKALLILNAFWFVWGMVLLV), 133–153 (FVIMLFQFITAATGMAAMAGV), 179–199 (ILLPLSLVVGFILILQGTPMG), 255–275 (MVECWSILIIPMAMVLALGFY), 281–301 (LGYSIFGVMLFAYLAGVFINV), 375–395 (FGGVGVGWLNYYTFIIMAVFI), 418–438 (IATFVALLHPFVILVFTAISS), 497–517 (IVLILSRFIPIVGQVAIAGLL), and 535–555 (VTFAVMTFAVIFIVAALSFFP).

The protein belongs to the KdpA family. As to quaternary structure, the system is composed of three essential subunits: KdpA, KdpB and KdpC.

The protein localises to the cell inner membrane. In terms of biological role, part of the high-affinity ATP-driven potassium transport (or Kdp) system, which catalyzes the hydrolysis of ATP coupled with the electrogenic transport of potassium into the cytoplasm. This subunit binds the periplasmic potassium ions and delivers the ions to the membrane domain of KdpB through an intramembrane tunnel. The polypeptide is Potassium-transporting ATPase potassium-binding subunit (Bacteroides fragilis (strain ATCC 25285 / DSM 2151 / CCUG 4856 / JCM 11019 / LMG 10263 / NCTC 9343 / Onslow / VPI 2553 / EN-2)).